A 252-amino-acid polypeptide reads, in one-letter code: Triosephosphate isomerase (252 aa).

Position 9 to 11 (9 to 11 (NWK)) interacts with substrate. The active-site Electrophile is H95. E167 (proton acceptor) is an active-site residue. Substrate-binding positions include G173, S211, and 232–233 (GG).

This sequence belongs to the triosephosphate isomerase family. In terms of assembly, homodimer.

It localises to the cytoplasm. It carries out the reaction D-glyceraldehyde 3-phosphate = dihydroxyacetone phosphate. The protein operates within carbohydrate biosynthesis; gluconeogenesis. Its pathway is carbohydrate degradation; glycolysis; D-glyceraldehyde 3-phosphate from glycerone phosphate: step 1/1. Its function is as follows. Involved in the gluconeogenesis. Catalyzes stereospecifically the conversion of dihydroxyacetone phosphate (DHAP) to D-glyceraldehyde-3-phosphate (G3P). In Marinobacter nauticus (strain ATCC 700491 / DSM 11845 / VT8) (Marinobacter aquaeolei), this protein is Triosephosphate isomerase.